The sequence spans 111 residues: Nucleoid-associated protein NMCC_1355 (111 aa).

This sequence belongs to the YbaB/EbfC family. In terms of assembly, homodimer.

The protein resides in the cytoplasm. It is found in the nucleoid. Its function is as follows. Binds to DNA and alters its conformation. May be involved in regulation of gene expression, nucleoid organization and DNA protection. This is Nucleoid-associated protein NMCC_1355 from Neisseria meningitidis serogroup C (strain 053442).